Consider the following 103-residue polypeptide: Large ribosomal subunit protein uL24 (103 aa).

Belongs to the universal ribosomal protein uL24 family. In terms of assembly, part of the 50S ribosomal subunit.

One of two assembly initiator proteins, it binds directly to the 5'-end of the 23S rRNA, where it nucleates assembly of the 50S subunit. Its function is as follows. One of the proteins that surrounds the polypeptide exit tunnel on the outside of the subunit. The protein is Large ribosomal subunit protein uL24 of Brucella abortus (strain S19).